Reading from the N-terminus, the 396-residue chain is Stearoyl-[acyl-carrier-protein] 9-desaturase, chloroplastic (396 aa).

The transit peptide at 1 to 33 (MALRITPVTLQSERYRSFSFPKKANLRSPKFAM) directs the protein to the chloroplast. Alanine 34 carries the post-translational modification Blocked amino end (Ala); partial. Residues glutamate 138, glutamate 176, histidine 179, glutamate 229, glutamate 262, and histidine 265 each coordinate Fe cation.

Belongs to the fatty acid desaturase type 2 family. In terms of assembly, homodimer. The cofactor is Fe(2+). Most of the N-terminus is blocked.

Its subcellular location is the plastid. The protein resides in the chloroplast. It catalyses the reaction octadecanoyl-[ACP] + 2 reduced [2Fe-2S]-[ferredoxin] + O2 + 2 H(+) = (9Z)-octadecenoyl-[ACP] + 2 oxidized [2Fe-2S]-[ferredoxin] + 2 H2O. It functions in the pathway lipid metabolism; fatty acid metabolism. In terms of biological role, converts stearoyl-ACP to oleoyl-ACP by introduction of a cis double bond between carbons 9 and 10 of the acyl chain. In Carthamus tinctorius (Safflower), this protein is Stearoyl-[acyl-carrier-protein] 9-desaturase, chloroplastic.